The primary structure comprises 269 residues: 5'-nucleotidase SurE (269 aa).

A divalent metal cation is bound by residues Asp11, Asp12, Ser43, and Asn101.

The protein belongs to the SurE nucleotidase family. The cofactor is a divalent metal cation.

The protein resides in the cytoplasm. The catalysed reaction is a ribonucleoside 5'-phosphate + H2O = a ribonucleoside + phosphate. Functionally, nucleotidase that shows phosphatase activity on nucleoside 5'-monophosphates. In Synechococcus sp. (strain CC9605), this protein is 5'-nucleotidase SurE.